Here is a 145-residue protein sequence, read N- to C-terminus: Large ribosomal subunit protein uL15 (145 aa).

Residues 1–30 (MAHSLRKTRKLRGHVSHGHGRIGKHRKHPG) are compositionally biased toward basic residues. Residues 1-48 (MAHSLRKTRKLRGHVSHGHGRIGKHRKHPGGRGNAGGQHHHRINRDKY) are disordered.

The protein belongs to the universal ribosomal protein uL15 family. Component of the large ribosomal subunit.

The protein localises to the cytoplasm. The protein resides in the cytosol. It is found in the rough endoplasmic reticulum. Its function is as follows. Component of the large ribosomal subunit. The protein is Large ribosomal subunit protein uL15 (rpl-27a) of Oscheius tipulae.